Reading from the N-terminus, the 371-residue chain is GTPase Obg (371 aa).

The Obg domain occupies 1-159 (MKFVDEAYID…KNLKLELKVL (159 aa)). One can recognise an OBG-type G domain in the interval 160–334 (ADVGLLGMPN…LIRTIYKHVH (175 aa)). Residues 166–173 (GMPNAGKS), 191–195 (FTTLH), 213–216 (DIPG), 284–287 (NKLD), and 315–317 (SAL) each bind GTP. S173 and T193 together coordinate Mg(2+).

The protein belongs to the TRAFAC class OBG-HflX-like GTPase superfamily. OBG GTPase family. In terms of assembly, monomer. Mg(2+) is required as a cofactor.

The protein localises to the cytoplasm. Its function is as follows. An essential GTPase which binds GTP, GDP and possibly (p)ppGpp with moderate affinity, with high nucleotide exchange rates and a fairly low GTP hydrolysis rate. Plays a role in control of the cell cycle, stress response, ribosome biogenesis and in those bacteria that undergo differentiation, in morphogenesis control. This chain is GTPase Obg, found in Delftia acidovorans (strain DSM 14801 / SPH-1).